A 111-amino-acid chain; its full sequence is MISTVALFWALFLVCVINMARYFSSLRALLVVLRGCDPLLYQYVDGGGFFTAHGQPSKQIRLVWYIYWQRYLDHHDDEFIRRCERVRRQFILTSALCGLVIISLIGLMIWH.

Helical transmembrane passes span 1–21 and 90–110; these read MIST…NMAR and FILT…LMIW.

It belongs to the universal stress protein B family.

The protein resides in the cell inner membrane. The sequence is that of Universal stress protein B from Cronobacter sakazakii (strain ATCC BAA-894) (Enterobacter sakazakii).